We begin with the raw amino-acid sequence, 334 residues long: Aspartate carbamoyltransferase catalytic subunit (334 aa).

Carbamoyl phosphate-binding residues include Arg71 and Thr72. Residue Lys99 participates in L-aspartate binding. Residues Arg121, His151, and Gln154 each contribute to the carbamoyl phosphate site. 2 residues coordinate L-aspartate: Arg184 and Arg239. 2 residues coordinate carbamoyl phosphate: Gly280 and Pro281.

It belongs to the aspartate/ornithine carbamoyltransferase superfamily. ATCase family. In terms of assembly, heterododecamer (2C3:3R2) of six catalytic PyrB chains organized as two trimers (C3), and six regulatory PyrI chains organized as three dimers (R2).

It catalyses the reaction carbamoyl phosphate + L-aspartate = N-carbamoyl-L-aspartate + phosphate + H(+). It participates in pyrimidine metabolism; UMP biosynthesis via de novo pathway; (S)-dihydroorotate from bicarbonate: step 2/3. Its function is as follows. Catalyzes the condensation of carbamoyl phosphate and aspartate to form carbamoyl aspartate and inorganic phosphate, the committed step in the de novo pyrimidine nucleotide biosynthesis pathway. In Pseudomonas syringae pv. tomato (strain ATCC BAA-871 / DC3000), this protein is Aspartate carbamoyltransferase catalytic subunit.